The following is a 340-amino-acid chain: Phospho-N-acetylmuramoyl-pentapeptide-transferase (340 aa).

10 consecutive transmembrane segments (helical) span residues 3-23, 53-73, 79-99, 119-139, 144-164, 176-196, 200-220, 227-247, 250-270, and 315-335; these read MSLI…PHFI, GGTV…FHVF, AYGA…IGFL, MALQ…PSGT, IGGL…FWIV, IDGL…IIAF, ELAI…FFVF, VFMG…ISIA, VEWT…SVML, and VDAF…WMVL.

The protein belongs to the glycosyltransferase 4 family. MraY subfamily. Mg(2+) serves as cofactor.

It localises to the cell membrane. The catalysed reaction is UDP-N-acetyl-alpha-D-muramoyl-L-alanyl-gamma-D-glutamyl-L-lysyl-D-alanyl-D-alanine + di-trans,octa-cis-undecaprenyl phosphate = Mur2Ac(oyl-L-Ala-gamma-D-Glu-L-Lys-D-Ala-D-Ala)-di-trans,octa-cis-undecaprenyl diphosphate + UMP. It functions in the pathway cell wall biogenesis; peptidoglycan biosynthesis. Functionally, catalyzes the initial step of the lipid cycle reactions in the biosynthesis of the cell wall peptidoglycan: transfers peptidoglycan precursor phospho-MurNAc-pentapeptide from UDP-MurNAc-pentapeptide onto the lipid carrier undecaprenyl phosphate, yielding undecaprenyl-pyrophosphoryl-MurNAc-pentapeptide, known as lipid I. The sequence is that of Phospho-N-acetylmuramoyl-pentapeptide-transferase from Streptococcus thermophilus (strain ATCC BAA-250 / LMG 18311).